Here is a 409-residue protein sequence, read N- to C-terminus: Lissencephaly-1 homolog (409 aa).

Residues 7–39 (QEEELRFAVADYLQSCGYTNALEAFKKDASIPK) enclose the LisH domain. Positions 56–81 (SVVRLQKKVMDLELRLNNTTREMNSG) form a coiled coil. Over residues 75 to 92 (TREMNSGVPTRNSRSSND) the composition is skewed to polar residues. Residues 75-105 (TREMNSGVPTRNSRSSNDWIPRPPEKHSLSG) are disordered. 7 WD repeats span residues 105–146 (GHRS…RTLR), 147–186 (GHTDSVQDLAFDSSGKLLASSSADMTVKIWDFQTFECRMT), 189–228 (GHDHNVSSVCFLPSGDFLLSSSRDKTIKMWEVATGYCVYN), 231–270 (GHREWVRRVAVASDGSLMASCSNDQTVRIWSLSSKECKEE), 273–332 (GHEH…CLFS), 335–374 (GHDNWVRGLAFHAGGKYLTSASDDKTIKIWELRHKRCSKS), and 377–409 (AHNHFVTTIDFHRSSPFVITGSVDLTIKVWECR).

It belongs to the WD repeat LIS1/nudF family.

The protein localises to the cytoplasm. It is found in the cytoskeleton. Its subcellular location is the microtubule organizing center. The protein resides in the centrosome. Its function is as follows. Positively regulates the activity of the minus-end directed microtubule motor protein dynein. May enhance dynein-mediated microtubule sliding by targeting dynein to the microtubule plus end. Required for several dynein- and microtubule-dependent processes. This chain is Lissencephaly-1 homolog, found in Trichoplax adhaerens (Trichoplax reptans).